A 174-amino-acid polypeptide reads, in one-letter code: Inner membrane protein p22 (174 aa).

Residues 1–7 (MLHIKMT) lie on the Intravirion side of the membrane. The helical transmembrane segment at 8–28 (ISTLLIALIVLLIIILVVFLY) threads the bilayer. Residues 29–174 (HKKQQPPKKV…LYLPRNHKYA (146 aa)) are Virion surface-facing.

This sequence belongs to the asfivirus inner membrane protein p22 family.

It is found in the virion membrane. The protein resides in the host cell membrane. The sequence is that of Inner membrane protein p22 from African swine fever virus (isolate Pig/Kenya/KEN-50/1950) (ASFV).